Reading from the N-terminus, the 127-residue chain is Fluoride-specific ion channel FluC (127 aa).

Helical transmembrane passes span 4–24, 35–55, 71–91, and 103–123; these read LLLA…LLSM, LGTL…FAWF, TGFC…VFLL, and VFVN…LFSA. Positions 75 and 78 each coordinate Na(+).

Belongs to the fluoride channel Fluc/FEX (TC 1.A.43) family.

It localises to the cell inner membrane. It carries out the reaction fluoride(in) = fluoride(out). With respect to regulation, na(+) is not transported, but it plays an essential structural role and its presence is essential for fluoride channel function. In terms of biological role, fluoride-specific ion channel. Important for reducing fluoride concentration in the cell, thus reducing its toxicity. This chain is Fluoride-specific ion channel FluC, found in Escherichia coli O81 (strain ED1a).